The following is a 189-amino-acid chain: UPF0312 protein VC_A0539 (189 aa).

A signal peptide spans 1 to 22 (MKKTLMAVGLAAVMSIPFAANA).

This sequence belongs to the UPF0312 family. Type 1 subfamily.

The protein localises to the periplasm. The protein is UPF0312 protein VC_A0539 of Vibrio cholerae serotype O1 (strain ATCC 39315 / El Tor Inaba N16961).